We begin with the raw amino-acid sequence, 305 residues long: tRNA dimethylallyltransferase (305 aa).

Residue 9–16 coordinates ATP; sequence GPTASGKS. A substrate-binding site is contributed by 11–16; that stretch reads TASGKS. An interaction with substrate tRNA region spans residues 34–37; the sequence is DSKQ.

This sequence belongs to the IPP transferase family. Monomer. Mg(2+) serves as cofactor.

The catalysed reaction is adenosine(37) in tRNA + dimethylallyl diphosphate = N(6)-dimethylallyladenosine(37) in tRNA + diphosphate. In terms of biological role, catalyzes the transfer of a dimethylallyl group onto the adenine at position 37 in tRNAs that read codons beginning with uridine, leading to the formation of N6-(dimethylallyl)adenosine (i(6)A). The protein is tRNA dimethylallyltransferase of Anaplasma marginale (strain St. Maries).